We begin with the raw amino-acid sequence, 343 residues long: Glucokinase (343 aa).

Position 18–23 (18–23) interacts with ATP; sequence GDIGGT.

Belongs to the bacterial glucokinase family.

It is found in the cytoplasm. The catalysed reaction is D-glucose + ATP = D-glucose 6-phosphate + ADP + H(+). This Brucella suis biovar 1 (strain 1330) protein is Glucokinase.